Consider the following 302-residue polypeptide: Glutaminase (302 aa).

Substrate-binding residues include Ser-61, Asn-111, Glu-155, Asn-162, Tyr-186, Tyr-238, and Val-256.

It belongs to the glutaminase family. As to quaternary structure, homotetramer.

The enzyme catalyses L-glutamine + H2O = L-glutamate + NH4(+). This is Glutaminase from Pseudomonas fluorescens (strain Pf0-1).